A 553-amino-acid polypeptide reads, in one-letter code: Probable malate:quinone oxidoreductase (553 aa).

Residues 524 to 553 (PPPKIDLGAPSQATGNAPARPAKASADMAL) are disordered.

The protein belongs to the MQO family. FAD is required as a cofactor.

It catalyses the reaction (S)-malate + a quinone = a quinol + oxaloacetate. It functions in the pathway carbohydrate metabolism; tricarboxylic acid cycle; oxaloacetate from (S)-malate (quinone route): step 1/1. The chain is Probable malate:quinone oxidoreductase from Burkholderia cenocepacia (strain HI2424).